The primary structure comprises 860 residues: MQEQYRPEEIEADVQLHWQEKQTFKVTEQLGKEKYYCLSMLPYPSGRLHMGHVRNYTIGDVISRYQRMLGKNVLQPIGWDAFGLPAEGAAVKNNTAPAPWTYANIDYMKNQLKLLGFGYDWDREIATCKPDYYRWEQWFFTKLYEKGLVYKKTSAVNWCPNDQTVLANEQVIDGCCWRCDTKVERKEIPQWFIKITAYADQLLNDLDTLESWPEQVKTMQRNWIGRSEGVEITFDVADSEEKLSVYTTRPDTFMGVTYVAVAAGHPLAAQAAVTNPALADFIAECRNTKVAEADMATMEKKGMATGLYAIHPLNGEKVAIWVANFVLMEYGTGAVMAVPGHDQRDWEFATKYDLSIKPVILNADGSEPDLSAQAMTEKGSLFNSGEFDGLDFEAGFNAIADKLVEKGIGERKVNYRLRDWGVSRQRYWGAPIPMMTLEDGTVIPTPEDQLPVILPEDVVMDGITSPLKSNPEWAKTTVNGQPALRETDTFDTFMESSWYYARYTCPQYDQGMLDPAAANYWLPVDQYVGGIEHAIMHLMYFRFFHKLMRDAGLVTSDEPAKRLLCQGMVLADAFYYLGNNGERIWVSPTDVTVERDEKGRIVKATDNEGRDVVYAGMSKMSKSKNNGIDPQIMVEKYGADTVRLFMMFASPAEMTLEWQESGVEGANRFLKRVWRQAFEHTGKGAVTALDITTLTEDQKSLRRDLHKTIAKVTDDIGRRQTFNTAIAAIMELMNKLAKAPQESDQDRALTQETLLAVVRMLYPFTPHVCFTLWQALQGEGDVDTAPWPVADENAMVEDSKLVVVQVNGKVRGKITVAADASEEQVRERAAQEPLVAKYLDGVTVRKVIYVPGKLLNLVVG.

Residues 42 to 52 (PYPSGRLHMGH) carry the 'HIGH' region motif. The 'KMSKS' region signature appears at 619 to 623 (KMSKS). Lysine 622 lines the ATP pocket.

This sequence belongs to the class-I aminoacyl-tRNA synthetase family.

Its subcellular location is the cytoplasm. The catalysed reaction is tRNA(Leu) + L-leucine + ATP = L-leucyl-tRNA(Leu) + AMP + diphosphate. This chain is Leucine--tRNA ligase, found in Pectobacterium atrosepticum (strain SCRI 1043 / ATCC BAA-672) (Erwinia carotovora subsp. atroseptica).